The chain runs to 171 residues: MQINLEKYIRTVEDFPKKGISFKDISPLLADGKALNYTIVEMASLAKDVDIIVGPDARGFLFGTPTAAFLSKPFIMIRKAGKLPGEVEEFAYELEYGSAILEVQVDMIKPGQKVAIIDDVLATGGTVKAITKMIERAGAIVDKIIFLIELEQLQGRKKLENYDVISLIKIS.

The protein belongs to the purine/pyrimidine phosphoribosyltransferase family. In terms of assembly, homodimer.

It localises to the cytoplasm. It carries out the reaction AMP + diphosphate = 5-phospho-alpha-D-ribose 1-diphosphate + adenine. The protein operates within purine metabolism; AMP biosynthesis via salvage pathway; AMP from adenine: step 1/1. Functionally, catalyzes a salvage reaction resulting in the formation of AMP, that is energically less costly than de novo synthesis. In Mesomycoplasma hyopneumoniae (strain 232) (Mycoplasma hyopneumoniae), this protein is Adenine phosphoribosyltransferase.